Reading from the N-terminus, the 361-residue chain is Peptide chain release factor 1 (361 aa).

At Q237 the chain carries N5-methylglutamine.

This sequence belongs to the prokaryotic/mitochondrial release factor family. Post-translationally, methylated by PrmC. Methylation increases the termination efficiency of RF1.

It is found in the cytoplasm. In terms of biological role, peptide chain release factor 1 directs the termination of translation in response to the peptide chain termination codons UAG and UAA. In Chromohalobacter salexigens (strain ATCC BAA-138 / DSM 3043 / CIP 106854 / NCIMB 13768 / 1H11), this protein is Peptide chain release factor 1.